Reading from the N-terminus, the 1531-residue chain is Nuclear factor of activated T-cells 5 (1531 aa).

Disordered stretches follow at residues 34-89 (ELQL…TSSS) and 114-141 (VSNR…RHTV). Polar residues predominate over residues 41–51 (RETSVASMSQT). A compositionally biased stretch (low complexity) spans 63–89 (VVAADASSAPSSSSMGGACSSFTTSSS). Serine 120 is subject to Phosphoserine. Lysine 122 bears the N6-acetyllysine mark. Positions 122–134 (KQLTSNTVQQHPS) are enriched in polar residues. Position 134 is a phosphoserine (serine 134). The residue at position 135 (threonine 135) is a Phosphothreonine; by CDK5. Serine 155 is modified (phosphoserine). Disordered regions lie at residues 175 to 220 (WMED…CEES) and 241 to 265 (TTDN…GVKK). The span at 179-192 (SPSNFSNMSTSSYN) shows a compositional bias: low complexity. Residues 200–212 (KSRKRNPKQRPGV) are compositionally biased toward basic residues. A compositionally biased stretch (polar residues) spans 241–260 (TTDNKGNSKAGNGTLENQKG). The RHD domain occupies 264–443 (KKSPMLCGQY…SPILCTQPAG (180 aa)). A DNA-binding region spans residues 293–300 (RARYLTEG). A Glycyl lysine isopeptide (Lys-Gly) (interchain with G-Cter in SUMO1); alternate cross-link involves residue lysine 556. Lysine 556 participates in a covalent cross-link: Glycyl lysine isopeptide (Lys-Gly) (interchain with G-Cter in SUMO2); alternate. Residue serine 561 is modified to Phosphoserine. Residues lysine 573 and lysine 603 each participate in a glycyl lysine isopeptide (Lys-Gly) (interchain with G-Cter in SUMO2) cross-link. Disordered regions lie at residues 640 to 666 (NIAG…QQIQ), 841 to 891 (VSPG…QVME), 958 to 996 (PPAV…TGTQ), 1211 to 1304 (PQVA…QEQQ), 1316 to 1371 (APMN…QEQQ), and 1473 to 1502 (ISQP…SPLA). The segment covering 646 to 656 (SFSSPSSSHLP) has biased composition (low complexity). 2 stretches are compositionally biased toward polar residues: residues 841 to 852 (VSPGMFSSTEPT) and 869 to 878 (HPQSENTLSN). Composition is skewed to low complexity over residues 879 to 888 (QQQQQQQQQQ) and 960 to 980 (AVSG…PGTT). Composition is skewed to polar residues over residues 981-996 (MFQT…TGTQ) and 1224-1247 (PQSQ…NSPS). Residues 1248 to 1266 (QEQQQQQQQQQQQQQQQQQ) are compositionally biased toward low complexity. Composition is skewed to polar residues over residues 1267–1278 (SILFSNQNTMAT) and 1291–1304 (FNPN…QEQQ). Residues 1320–1330 (QEQQPMQFQSQ) show a composition bias toward low complexity. Positions 1331–1371 (STVSSLQNPGPTQSESSQTPLFHSSPQIQLVQGSPSSQEQQ) are enriched in polar residues. Residues 1475 to 1486 (QPGQPQNEGQPP) show a composition bias toward low complexity. Over residues 1487–1502 (VTTLLSQQMPENSPLA) the composition is skewed to polar residues.

As to quaternary structure, homodimer when bound to DNA, completely encircles its DNA target. Interacts with CIDEC; this interaction is direct and retains NFAT5 in the cytoplasm. Does not bind with Fos and Jun transcription factors. Interacts with DDX5 and DDX17; this interaction leads to DDX5/DDX17 recruitment to LNC2 and S100A4 promoters and NFAT5-mediated DDX5/DDX17-enhanced transactivation. In terms of processing, phosphorylated. Phosphorylated at Thr-135 by CDK5 in response to osmotic stress; this phosphorylation mediates its rapid nuclear localization. Poly-ADP-ribosylated by PARP1 in response to DNA damage, promoting recruitment to sites of R-loop-associated DNA damage. Widely expressed, with highest levels in skeletal muscle, brain, heart and peripheral blood leukocytes.

It localises to the nucleus. Its subcellular location is the cytoplasm. It is found in the chromosome. Functionally, transcription factor involved, among others, in the transcriptional regulation of osmoprotective and inflammatory genes. Binds the DNA consensus sequence 5'-[ACT][AG]TGGAAA[CAT]A[TA][ATC][CA][ATG][GT][GAC][CG][CT]-3'. Mediates the transcriptional response to hypertonicity. Positively regulates the transcription of LCN2 and S100A4 genes; optimal transactivation of these genes requires the presence of DDX5/DDX17. Also involved in the DNA damage response by preventing formation of R-loops; R-loops are composed of a DNA:RNA hybrid and the associated non-template single-stranded DNA. This chain is Nuclear factor of activated T-cells 5, found in Homo sapiens (Human).